Consider the following 568-residue polypeptide: DNA mismatch repair protein MutL (568 aa).

This sequence belongs to the DNA mismatch repair MutL/HexB family.

In terms of biological role, this protein is involved in the repair of mismatches in DNA. It is required for dam-dependent methyl-directed DNA mismatch repair. May act as a 'molecular matchmaker', a protein that promotes the formation of a stable complex between two or more DNA-binding proteins in an ATP-dependent manner without itself being part of a final effector complex. The chain is DNA mismatch repair protein MutL from Thermosipho africanus (strain TCF52B).